Reading from the N-terminus, the 477-residue chain is MTDDMHKTENFPPDWLLVESLDLEAQGVAHRADGKVVFIKGALPFELVSANVHRKKNNWEQGVVTAIHRESSQRVQPGCPHFGLHEGACGGCKMQHLHVGAQVAVKQRVLEDNLWHLGKVKADTILRPIEGPAWGYRYRARLSVRYVRKKGELLIGFHERKSGYVADMKECPVLPPHVSDLLLPLRALISAMEAMETCPQIELACGDSVTALVLRHMEPLTHGDLALLRGFAAQHAGVQWWLQPNGPETAHLLDEGGQALSYDLPEFGIHMPFKPTDFTQVNPHINRVLVSRALRLLDAKRHERVIDWFCGLGNFTLPIATQAREVLGVEGSEALVARSRQNFKLNQALAPVNKSLAATNFVARNLFEMTPELLIQDGAADKWLVDPPREGAVSLVQALAELHQQKLDPIGHPPIVGAVGWMPPKRIVYVSCNPSTLARDADLLVHQAGYRCSFAGVVNMFPHTAHVESMAVFDLEV.

The region spanning 7–66 (KTENFPPDWLLVESLDLEAQGVAHRADGKVVFIKGALPFELVSANVHRKKNNWEQGVVTA) is the TRAM domain. Residues Cys-79, Cys-89, Cys-92, and Cys-171 each contribute to the [4Fe-4S] cluster site. Residues Gln-280, Phe-309, Asn-314, Glu-330, Asn-365, and Asp-386 each coordinate S-adenosyl-L-methionine. The active-site Nucleophile is the Cys-432.

Belongs to the class I-like SAM-binding methyltransferase superfamily. RNA M5U methyltransferase family. RlmD subfamily.

The enzyme catalyses uridine(1939) in 23S rRNA + S-adenosyl-L-methionine = 5-methyluridine(1939) in 23S rRNA + S-adenosyl-L-homocysteine + H(+). Its function is as follows. Catalyzes the formation of 5-methyl-uridine at position 1939 (m5U1939) in 23S rRNA. This is 23S rRNA (uracil(1939)-C(5))-methyltransferase RlmD from Albidiferax ferrireducens (strain ATCC BAA-621 / DSM 15236 / T118) (Rhodoferax ferrireducens).